Reading from the N-terminus, the 347-residue chain is Ribosomal RNA small subunit methyltransferase C (347 aa).

It belongs to the methyltransferase superfamily. RsmC family. In terms of assembly, monomer.

The protein resides in the cytoplasm. The catalysed reaction is guanosine(1207) in 16S rRNA + S-adenosyl-L-methionine = N(2)-methylguanosine(1207) in 16S rRNA + S-adenosyl-L-homocysteine + H(+). Specifically methylates the guanine in position 1207 of 16S rRNA in the 30S particle. This chain is Ribosomal RNA small subunit methyltransferase C, found in Shewanella putrefaciens (strain CN-32 / ATCC BAA-453).